The following is a 785-amino-acid chain: ATP-dependent 6-phosphofructokinase 1 (785 aa).

An N-terminal catalytic PFK domain 1 region spans residues Met-1 to Thr-389. Residues Gly-23, Arg-86–Ser-87, and Gly-116–Ser-119 contribute to the ATP site. Asp-117 lines the Mg(2+) pocket. Substrate is bound by residues Ser-162 to Asp-164, Arg-199, Met-206 to Arg-208, Glu-263, Arg-291, and His-297 to Arg-300. Catalysis depends on Asp-164, which acts as the Proton acceptor. Residues Pro-390–Met-403 are interdomain linker. The tract at residues Arg-404–Cys-785 is C-terminal regulatory PFK domain 2. Residues Arg-480, Thr-537 to Asn-541, Arg-575, Gln-582 to Gly-584, Glu-642, Arg-668, His-674 to Gln-677, and Arg-749 contribute to the beta-D-fructose 2,6-bisphosphate site.

Belongs to the phosphofructokinase type A (PFKA) family. ATP-dependent PFK group I subfamily. Eukaryotic two domain clade 'E' sub-subfamily. In terms of assembly, homotetramer. Mg(2+) serves as cofactor.

The protein localises to the cytoplasm. It catalyses the reaction beta-D-fructose 6-phosphate + ATP = beta-D-fructose 1,6-bisphosphate + ADP + H(+). Its pathway is carbohydrate degradation; glycolysis; D-glyceraldehyde 3-phosphate and glycerone phosphate from D-glucose: step 3/4. Its activity is regulated as follows. Allosterically activated by ADP, AMP, or fructose 2,6-bisphosphate, and allosterically inhibited by ATP or citrate. Catalyzes the phosphorylation of D-fructose 6-phosphate to fructose 1,6-bisphosphate by ATP, the first committing step of glycolysis. The sequence is that of ATP-dependent 6-phosphofructokinase 1 (pfkA) from Aspergillus oryzae (strain ATCC 42149 / RIB 40) (Yellow koji mold).